Consider the following 346-residue polypeptide: Enkurin domain-containing protein 1 (346 aa).

The interval 1 to 35 (MCEGPSRISGPIPPDPTLCPDNYRRPTSAQGRLEG) is disordered. The residue at position 91 (S91) is a Phosphoserine. The interval 91–171 (SLKRKDPKDH…AHFLRAHSRC (81 aa)) is required for binding to microtubules. Over residues 114 to 125 (RFREQERSREQG) the composition is skewed to basic and acidic residues. Disordered regions lie at residues 114 to 137 (RFRE…WRSP), 167 to 197 (AHSR…EPGL), and 260 to 280 (AEAR…TRMP). S136 bears the Phosphoserine mark. Over residues 174–190 (GLPPPHVSSPQPTPPGP) the composition is skewed to pro residues. Positions 251–343 (ERRDLWRREA…IFSRPKVFVK (93 aa)) constitute an Enkurin domain.

Interacts with alpha-tubulin. Interacts (via central region) with CCP110 (via N-terminal region); competes with CEP97 for binding to CCP110.

The protein localises to the cytoplasm. The protein resides in the cytoskeleton. It is found in the microtubule organizing center. It localises to the centrosome. Its subcellular location is the centriole. The protein localises to the cilium basal body. The protein resides in the cell projection. It is found in the cilium. It localises to the spindle. Its subcellular location is the spindle pole. The protein localises to the cilium axoneme. Microtubule-binding protein which regulates microtubule organization and stability. Promotes the stability of astral microtubules and facilitates the proper orientation of the mitotic spindle. This allows the oriented division of basal keratinocytes and contributes to epidermal stratification. Required for the assembly of both primary and motile cilia. Destabilizes the interaction between CCP110 and CEP97 by competing with CEP97 for binding to CCP110 which promotes the removal of CCP110 and CEP97 from the mother centriole and allows the initiation of ciliogenesis. The sequence is that of Enkurin domain-containing protein 1 (ENKD1) from Homo sapiens (Human).